We begin with the raw amino-acid sequence, 1077 residues long: Receptor-type guanylate cyclase daf-11 (1077 aa).

N-linked (GlcNAc...) asparagine glycosylation is found at Asn14, Asn112, Asn149, and Asn311. Residues 335–355 (TGVIIAIAVIMGVLLMFIIIL) form a helical membrane-spanning segment. Positions 355–695 (LTTIRKCCNG…LARKIIDTVL (341 aa)) constitute a Protein kinase domain. At 356 to 1077 (TTIRKCCNGS…DSQASTIPDN (722 aa)) the chain is on the cytoplasmic side. Positions 765–895 (TILYSDIVGF…EAVILASKME (131 aa)) constitute a Guanylate cyclase domain. Residues Asp770, Ile771, and Asp814 each contribute to the Mg(2+) site. The stretch at 983 to 1034 (KDKMTLAKEKVIAERKNEEERLQRQQTLQEALEEHEEEIEMNEVLVDEDEGE) forms a coiled coil. The tract at residues 1048-1077 (TQMEELEDEPAGRTIGHGRLDSQASTIPDN) is disordered.

Belongs to the adenylyl cyclase class-4/guanylyl cyclase family. In terms of tissue distribution, expressed in sensory neurons including ASI, ASJ, ASK, AWB and AWC. Expressed in ASJ neurons in the dauer stage.

Its subcellular location is the cell membrane. It localises to the cell projection. The protein localises to the dendrite. The protein resides in the cilium. It is found in the perikaryon. The catalysed reaction is GTP = 3',5'-cyclic GMP + diphosphate. Its function is as follows. Guanylate cyclase involved in the production of the second messenger cGMP. In addition, regulates cGMP levels by controlling the transcription of 3',5'-cyclic phosphodiesterase pde-1 and pde-5 mRNAs. Involved in the olfactory, light and pheromone sensing pathways. Part of the chemosensory mechanism of the ASJ sensory neuron that controls dauer formation and dauer recovery. Promotes the calcium flux in ASJ sensory neurons in response to onset and removal of a nitric oxide (NO) stimulus and is thereby required for the behavioral avoidance response to NO-producing organisms like P.aeruginosa. In ASI and ASJ sensory neurons, controls dauer formation and behavioral response to P.aeruginosa by up-regulating the transcription of daf-7, a member of the TGF-beta family. Required for the chemotaxis responses to non-volatile and volatile attractants mediated by the sensory neurons ASE and AWC respectively. Required in ASJ neurons for phototransduction downstream of G protein coupled-photoreceptor lite-1. Plays a role in the development of ASJ sensory neuron axons during late larval stages and in the maintenance of normal axon morphology in adults. Required to maintain the expression of putative olfactory receptor str-2 in one of the two AWC neurons in adults. Regulates, via the production of cGMP, lifespan (in some environmental conditions), sensitivity to oxidative stress and entry into quiescence triggered by satiety. In AWB and AWC sensory neurons, mediates the recognition of food odors which subsequently allows for the detection of preferred food sources. The sequence is that of Receptor-type guanylate cyclase daf-11 from Caenorhabditis elegans.